The sequence spans 74 residues: UPF0154 protein OB1676 (74 aa).

A helical transmembrane segment spans residues 4-24 (IWVVLIAIAALVAGVALGFFI).

It belongs to the UPF0154 family.

Its subcellular location is the membrane. In Oceanobacillus iheyensis (strain DSM 14371 / CIP 107618 / JCM 11309 / KCTC 3954 / HTE831), this protein is UPF0154 protein OB1676.